The following is a 216-amino-acid chain: Protein Syd (216 aa).

The protein belongs to the Syd family.

The protein localises to the cell inner membrane. Its function is as follows. Interacts with the SecY protein in vivo. May bind preferentially to an uncomplexed state of SecY, thus functioning either as a chelating agent for excess SecY in the cell or as a regulatory factor that negatively controls the translocase function. The polypeptide is Protein Syd (Shewanella baltica (strain OS223)).